The sequence spans 445 residues: Mutanase Pc12g07500 (445 aa).

The signal sequence occupies residues 1–21 (MIWKSLFSALAILTHILPALT). Residues asparagine 386 and asparagine 437 are each glycosylated (N-linked (GlcNAc...) asparagine).

It belongs to the glycosyl hydrolase 71 family. As to quaternary structure, monomer.

It localises to the secreted. The enzyme catalyses Endohydrolysis of (1-&gt;3)-alpha-D-glucosidic linkages in isolichenin, pseudonigeran and nigeran.. In terms of biological role, hydrolyzes 1,3-alpha-glucan predominantly into pentasaccharides. May enhance the efficacy of fungal antibiotics by degrading bacterial exopolysaccharides. The protein is Mutanase Pc12g07500 of Penicillium rubens (strain ATCC 28089 / DSM 1075 / NRRL 1951 / Wisconsin 54-1255) (Penicillium chrysogenum).